The primary structure comprises 105 residues: MANWDGKYISPYAEHGKKSEQVKKITVSIPIKVLEILTNERTRRQLKSLRHATNSELLCEAFLHAFTGQPLPTDADLMKERNDEIPEDAKVLMRELGVDPESWEY.

This sequence belongs to the MetJ family. Homodimer.

The protein resides in the cytoplasm. In terms of biological role, this regulatory protein, when combined with SAM (S-adenosylmethionine) represses the expression of the methionine regulon and of enzymes involved in SAM synthesis. The sequence is that of Met repressor from Haemophilus influenzae (strain PittEE).